We begin with the raw amino-acid sequence, 376 residues long: Succinyl-diaminopimelate desuccinylase (376 aa).

Residue His-66 participates in Zn(2+) binding. Residue Asp-68 is part of the active site. Zn(2+) is bound at residue Asp-99. Glu-133 acts as the Proton acceptor in catalysis. The Zn(2+) site is built by Glu-134, Glu-162, and His-348.

The protein belongs to the peptidase M20A family. DapE subfamily. As to quaternary structure, homodimer. Zn(2+) serves as cofactor. The cofactor is Co(2+).

It carries out the reaction N-succinyl-(2S,6S)-2,6-diaminopimelate + H2O = (2S,6S)-2,6-diaminopimelate + succinate. It participates in amino-acid biosynthesis; L-lysine biosynthesis via DAP pathway; LL-2,6-diaminopimelate from (S)-tetrahydrodipicolinate (succinylase route): step 3/3. Its function is as follows. Catalyzes the hydrolysis of N-succinyl-L,L-diaminopimelic acid (SDAP), forming succinate and LL-2,6-diaminopimelate (DAP), an intermediate involved in the bacterial biosynthesis of lysine and meso-diaminopimelic acid, an essential component of bacterial cell walls. The polypeptide is Succinyl-diaminopimelate desuccinylase (Nitrosococcus oceani (strain ATCC 19707 / BCRC 17464 / JCM 30415 / NCIMB 11848 / C-107)).